A 50-amino-acid chain; its full sequence is Defensin D2 (50 aa).

4 cysteine pairs are disulfide-bonded: cysteine 3-cysteine 50, cysteine 14-cysteine 35, cysteine 20-cysteine 44, and cysteine 24-cysteine 46.

Post-translationally, contains 4 disulfide bonds.

Its subcellular location is the secreted. In terms of biological role, antimicrobial peptide active against fungi, Gram-positive and Gram-negative bacteria. Inhibits growth of hyphae in the fungi A.niger (IC(50)=3.5 ug/ml), B.sorokiniana (IC(50)=1.8 ug/ml), F.oxysporum (IC(50)=5.3 ug/ml), F.graminearum (IC(50)=6.9 ug/ml), F.culmorum (IC(50)=6.9 ug/ml) and B.cinerea (IC(50)=13.7 ug/ml). Has no effect on spore germination. Destroys spores in germinated conidia by disruption of cell walls and membranes in A.niger and B.sorokiniana. Causes vacuolization of germinated macro- and microconidia in F.oxysporum, F.graminearum and F.culmorum. Strongly inhibits growth of P.infestans on potato tubers above concentrations of 3.4 ug/ml. Inhibits growth of Gram-positive bacteria C.michiganensis and B.subtilis and of Gram-negative bacteria P.syringae, E.carotovora and E.coli. This chain is Defensin D2, found in Nigella sativa (Black cumin).